We begin with the raw amino-acid sequence, 222 residues long: GTP cyclohydrolase 1 (222 aa).

Cys111, His114, and Cys182 together coordinate Zn(2+).

It belongs to the GTP cyclohydrolase I family. As to quaternary structure, toroid-shaped homodecamer, composed of two pentamers of five dimers.

It catalyses the reaction GTP + H2O = 7,8-dihydroneopterin 3'-triphosphate + formate + H(+). It participates in cofactor biosynthesis; 7,8-dihydroneopterin triphosphate biosynthesis; 7,8-dihydroneopterin triphosphate from GTP: step 1/1. Its activity is regulated as follows. Allosteric enzyme. Activity is modulated by K(+), divalent cations, UTP, and tetrahydrobiopterin. Tetrahydrobiopterin is an inhibitor of this enzyme. This is GTP cyclohydrolase 1 from Salmonella typhi.